The following is a 63-amino-acid chain: Large ribosomal subunit protein bL32 (63 aa).

The segment at 1 to 20 (MANPKAKMSKSRRDKRRAQF) is disordered. Residues 7–18 (KMSKSRRDKRRA) show a composition bias toward basic residues.

This sequence belongs to the bacterial ribosomal protein bL32 family.

The protein is Large ribosomal subunit protein bL32 of Chlorobaculum tepidum (strain ATCC 49652 / DSM 12025 / NBRC 103806 / TLS) (Chlorobium tepidum).